We begin with the raw amino-acid sequence, 507 residues long: RNA-binding protein Nova-1 (507 aa).

A disordered region spans residues Met-1–Thr-44. The Bipartite nuclear localization signal motif lies at Lys-27–Asn-43. One can recognise a KH 1 domain in the interval Gln-49 to Ile-116. The interval Gln-139–Ala-171 is disordered. Positions Thr-150–Ser-169 are enriched in low complexity. The residue at position 154 (Ser-154) is a Phosphoserine. 2 consecutive KH domains span residues Ala-171 to Ile-237 and Lys-421 to Ile-488. The segment at Gly-419–Pro-503 is required for RNA binding.

Interacts with PTBP2; the interaction is direct. As to expression, expressed in cerebellum, brain stem, hippocampus, and frontal cortex.

It localises to the nucleus. Functions to regulate alternative splicing in neurons by binding pre-mRNA in a sequence-specific manner to activate exon inclusion or exclusion. It binds specifically to the sequences 5'-YCAY-3' and regulates splicing in only a subset of regulated exons. Binding to an exonic 5'-YCAY-3' cluster changes the protein complexes assembled on pre-mRNA, blocking U1 snRNP binding and exon inclusion, whereas binding to an intronic 5'-YCAY-3' cluster enhances spliceosome assembly and exon inclusion. Binding to 5'-YCAY-3' clusters results in a local and asymmetric action to regulate spliceosome assembly and alternative splicing in neurons. Binding to an exonic 5'-YCAY-3' cluster changed the protein complexes assembled on pre-mRNA, blocking U1 snRNP (small nuclear ribonucleoprotein) binding and exon inclusion, whereas binding to an intronic 5'-YCAY-3' cluster enhanced spliceosome assembly and exon inclusion. With NOVA1, they perform unique biological functions in different brain areas and cell types. Autoregulates its own expression by acting as a splicing repressor. Acts to activate the inclusion of exon E3A in the glycine receptor alpha-2 chain and of exon E9 in gamma-aminobutyric-acid receptor gamma-2 subunit via a distal downstream UCAU-rich intronic splicing enhancer. Acts to regulate a novel glycine receptor alpha-2 chain splice variant (alpha-2N) in developing spinal cord. The chain is RNA-binding protein Nova-1 from Homo sapiens (Human).